Reading from the N-terminus, the 517-residue chain is MQLNPAEISELIKSRIEGLGVSANIRNEGTVVSVTDGIVRVHGLSDAMQGEMLEFPPTADGTPSFGLALNLERDSVGAVILGEYEHISEGDTVKCTGRILEVPVGPELIGRVVNALGQPIDGKGPINAKMTDVIEKVAPGVIARKSVDQPMQTGLKSIDSMVPIGRGQRELIIGDRQTGKTAVAIDAIINQKGQNMTCVYVAIGQKASSIKNVVRALEQAGAMDYTIVVAASASESAAMQYVSAYSGCTMGEYFRDRGEDALIVYDDLSKQAVAYRQVSLLLRRPPGREAYPGDVFYLHSRLLERAARVNADYVEAFTKGEVKGKTGSLTALPIIETQAGDVSAFVPTNVISITDGQIFLETNLFNAGIRPAINAGISVSRVGSSAQTKVIKGLSGGIRTDLAQYRELAAFAQFASDLDEATRKQLDRGARVTELLKQAQYSPLPISLMGATLFAVNKGFMDDLEIKKVLPFEHGLHQFLKSSHAALLDKIEKAKALDKDAEAELTAAITSFKKSFA.

Position 174 to 181 (174 to 181 (GDRQTGKT)) interacts with ATP.

This sequence belongs to the ATPase alpha/beta chains family. As to quaternary structure, F-type ATPases have 2 components, CF(1) - the catalytic core - and CF(0) - the membrane proton channel. CF(1) has five subunits: alpha(3), beta(3), gamma(1), delta(1), epsilon(1). CF(0) has three main subunits: a(1), b(2) and c(9-12). The alpha and beta chains form an alternating ring which encloses part of the gamma chain. CF(1) is attached to CF(0) by a central stalk formed by the gamma and epsilon chains, while a peripheral stalk is formed by the delta and b chains.

It localises to the cell inner membrane. It catalyses the reaction ATP + H2O + 4 H(+)(in) = ADP + phosphate + 5 H(+)(out). Produces ATP from ADP in the presence of a proton gradient across the membrane. The alpha chain is a regulatory subunit. This is ATP synthase subunit alpha from Variovorax paradoxus (strain S110).